Consider the following 1045-residue polypeptide: Probable sucrose-phosphate synthase (1045 aa).

Basic and acidic residues-rich tracts occupy residues 93 to 115 and 124 to 137; these read ENEE…REAT and EGEK…DSTR. Disordered stretches follow at residues 93-141, 222-243, and 662-692; these read ENEE…PRLP, WSYG…DDDD, and IASS…SDSL. The span at 664–674 shows a compositional bias: low complexity; sequence SSRQRQPQWQR.

Belongs to the glycosyltransferase 1 family. Homodimer or homotetramer. As to expression, predominantly active in tap root.

It catalyses the reaction beta-D-fructose 6-phosphate + UDP-alpha-D-glucose = sucrose 6(F)-phosphate + UDP + H(+). It participates in glycan biosynthesis; sucrose biosynthesis; sucrose from D-fructose 6-phosphate and UDP-alpha-D-glucose: step 1/2. Its activity is regulated as follows. Activity is regulated by phosphorylation and moderated by concentration of metabolites and light. Functionally, plays a role in photosynthetic sucrose synthesis by catalyzing the rate-limiting step of sucrose biosynthesis from UDP-glucose and fructose- 6-phosphate. Involved in the regulation of carbon partitioning in the leaves of plants. May regulate the synthesis of sucrose and therefore play a major role as a limiting factor in the export of photoassimilates out of the leaf. Plays a role for sucrose availability that is essential for plant growth and fiber elongation. The polypeptide is Probable sucrose-phosphate synthase (SPS) (Beta vulgaris (Sugar beet)).